The chain runs to 92 residues: Small ribosomal subunit protein uS19c (92 aa).

It belongs to the universal ribosomal protein uS19 family.

It is found in the plastid. The protein localises to the chloroplast. In terms of biological role, protein S19 forms a complex with S13 that binds strongly to the 16S ribosomal RNA. The polypeptide is Small ribosomal subunit protein uS19c (Rhodomonas salina (Cryptomonas salina)).